A 342-amino-acid chain; its full sequence is Holliday junction branch migration complex subunit RuvB (342 aa).

Residues 1–179 (MTNILSPEKS…FGIPMRLNFY (179 aa)) form a large ATPase domain (RuvB-L) region. ATP is bound by residues isoleucine 18, arginine 19, glycine 60, lysine 63, threonine 64, threonine 65, 126–128 (EDF), arginine 169, tyrosine 179, and arginine 216. Threonine 64 provides a ligand contact to Mg(2+). The tract at residues 180–250 (NTEELKQVLN…ICDFGLKRLT (71 aa)) is small ATPAse domain (RuvB-S). Residues 253 to 342 (SIGLDSNDYR…NQLNILNENE (90 aa)) form a head domain (RuvB-H) region. DNA contacts are provided by arginine 289, arginine 308, and arginine 313.

This sequence belongs to the RuvB family. In terms of assembly, homohexamer. Forms an RuvA(8)-RuvB(12)-Holliday junction (HJ) complex. HJ DNA is sandwiched between 2 RuvA tetramers; dsDNA enters through RuvA and exits via RuvB. An RuvB hexamer assembles on each DNA strand where it exits the tetramer. Each RuvB hexamer is contacted by two RuvA subunits (via domain III) on 2 adjacent RuvB subunits; this complex drives branch migration. In the full resolvosome a probable DNA-RuvA(4)-RuvB(12)-RuvC(2) complex forms which resolves the HJ.

Its subcellular location is the cytoplasm. The enzyme catalyses ATP + H2O = ADP + phosphate + H(+). Functionally, participates in UV-tolerance of Synechocystis PCC 6803. In terms of biological role, the RuvA-RuvB-RuvC complex processes Holliday junction (HJ) DNA during genetic recombination and DNA repair, while the RuvA-RuvB complex plays an important role in the rescue of blocked DNA replication forks via replication fork reversal (RFR). RuvA specifically binds to HJ cruciform DNA, conferring on it an open structure. The RuvB hexamer acts as an ATP-dependent pump, pulling dsDNA into and through the RuvAB complex. RuvB forms 2 homohexamers on either side of HJ DNA bound by 1 or 2 RuvA tetramers; 4 subunits per hexamer contact DNA at a time. Coordinated motions by a converter formed by DNA-disengaged RuvB subunits stimulates ATP hydrolysis and nucleotide exchange. Immobilization of the converter enables RuvB to convert the ATP-contained energy into a lever motion, pulling 2 nucleotides of DNA out of the RuvA tetramer per ATP hydrolyzed, thus driving DNA branch migration. The RuvB motors rotate together with the DNA substrate, which together with the progressing nucleotide cycle form the mechanistic basis for DNA recombination by continuous HJ branch migration. Branch migration allows RuvC to scan DNA until it finds its consensus sequence, where it cleaves and resolves cruciform DNA. This Rickettsia prowazekii (strain Madrid E) protein is Holliday junction branch migration complex subunit RuvB.